Consider the following 321-residue polypeptide: Protein OPG049 (321 aa).

Positions 1–20 (MGTNVVRVFVILYLLAVCGC) are cleaved as a signal peptide. 7 N-linked (GlcNAc...) asparagine; by host glycosylation sites follow: Asn41, Asn72, Asn79, Asn108, Asn144, Asn220, and Asn245. The chain crosses the membrane as a helical span at residues 286 to 306 (LIMIVLITMLSIILVIIVVIA).

This sequence belongs to the orthopoxvirus OPG049 family.

The protein resides in the host cell membrane. In terms of biological role, plays a role in the spread of virus to neighboring cells ex vivo. This chain is Protein OPG049 (OPG049), found in Vaccinia virus (strain Copenhagen) (VACV).